The following is a 331-amino-acid chain: Probable 5-dehydro-4-deoxyglucarate dehydratase 2 (331 aa).

The tract at residues Met-1–Thr-23 is disordered. The segment covering Asp-10–Thr-23 has biased composition (low complexity).

It belongs to the DapA family.

The enzyme catalyses 5-dehydro-4-deoxy-D-glucarate + H(+) = 2,5-dioxopentanoate + CO2 + H2O. It participates in carbohydrate acid metabolism; D-glucarate degradation; 2,5-dioxopentanoate from D-glucarate: step 2/2. This chain is Probable 5-dehydro-4-deoxyglucarate dehydratase 2, found in Streptomyces avermitilis (strain ATCC 31267 / DSM 46492 / JCM 5070 / NBRC 14893 / NCIMB 12804 / NRRL 8165 / MA-4680).